Consider the following 748-residue polypeptide: Catalase-peroxidase (748 aa).

A cross-link (tryptophyl-tyrosyl-methioninium (Trp-Tyr) (with M-262)) is located at residues 91–236 (WHSAGTYRVG…LAAVQMGLIY (146 aa)). His-92 serves as the catalytic Proton acceptor. The interval 201–223 (AQPVADKAGHGKEHGRTDGGRNL) is disordered. Residues 207–221 (KAGHGKEHGRTDGGR) are compositionally biased toward basic and acidic residues. The segment at residues 236–262 (YVNPEGPDGNPDPQASAHDIRETFARM) is a cross-link (tryptophyl-tyrosyl-methioninium (Tyr-Met) (with W-91)). Position 277 (His-277) interacts with heme b.

Belongs to the peroxidase family. Peroxidase/catalase subfamily. As to quaternary structure, homodimer or homotetramer. It depends on heme b as a cofactor. In terms of processing, formation of the three residue Trp-Tyr-Met cross-link is important for the catalase, but not the peroxidase activity of the enzyme.

The enzyme catalyses H2O2 + AH2 = A + 2 H2O. It carries out the reaction 2 H2O2 = O2 + 2 H2O. Its function is as follows. Bifunctional enzyme with both catalase and broad-spectrum peroxidase activity. This chain is Catalase-peroxidase, found in Bordetella avium (strain 197N).